The chain runs to 426 residues: Fatty alcohol:caffeoyl-CoA acyltransferase (426 aa).

Catalysis depends on proton acceptor residues His162 and Asp374.

It belongs to the plant acyltransferase family. Expressed in the outermost circumference of mature roots, the endodermis of young roots and in the seed coat of developing seeds. Expressed in outer integument layer 1 of the seed coat.

In terms of biological role, involved in the synthesis of alkyl hydroxycinnamates in root waxes. Functions as a fatty alcohol:hydroxy cinnamoyl-CoA acyltransferase with apparent preference for caffeoyl-CoA. The protein is Fatty alcohol:caffeoyl-CoA acyltransferase of Arabidopsis thaliana (Mouse-ear cress).